The following is a 787-amino-acid chain: Lon protease (787 aa).

The Lon N-terminal domain occupies 12–210 (LPLIPLRGLA…LIYSILLEEI (199 aa)). 362–369 (GPPGTGKT) serves as a coordination point for ATP. Residues 599 to 780 (NPQIGLVNGL…DEVLEQALLK (182 aa)) enclose the Lon proteolytic domain. Residues serine 686 and lysine 729 contribute to the active site.

Belongs to the peptidase S16 family. In terms of assembly, homohexamer. Organized in a ring with a central cavity.

It is found in the cytoplasm. The catalysed reaction is Hydrolysis of proteins in presence of ATP.. Functionally, ATP-dependent serine protease that mediates the selective degradation of mutant and abnormal proteins as well as certain short-lived regulatory proteins. Required for cellular homeostasis and for survival from DNA damage and developmental changes induced by stress. Degrades polypeptides processively to yield small peptide fragments that are 5 to 10 amino acids long. Binds to DNA in a double-stranded, site-specific manner. The chain is Lon protease from Clostridioides difficile (strain 630) (Peptoclostridium difficile).